We begin with the raw amino-acid sequence, 251 residues long: Small ribosomal subunit protein uS3 (251 aa).

The 73-residue stretch at 39–111 (IRELINNFSK…DVDLNILEVK (73 aa)) folds into the KH type-2 domain.

The protein belongs to the universal ribosomal protein uS3 family. Part of the 30S ribosomal subunit. Forms a tight complex with proteins S10 and S14.

In terms of biological role, binds the lower part of the 30S subunit head. Binds mRNA in the 70S ribosome, positioning it for translation. This is Small ribosomal subunit protein uS3 from Phytoplasma sp. (strain STRAWB1).